We begin with the raw amino-acid sequence, 455 residues long: Periplasmic pH-dependent serine endoprotease DegQ (455 aa).

The first 27 residues, 1-27, serve as a signal peptide directing secretion; it reads MKKQTQLLSALALSVGLTLSASFQAVA. Substrate-binding positions include E59, H109, D139, G212, 212–214, 230–234, and 269–273; these read GNS, TAILA, and LGIKG. Active-site charge relay system residues include H109 and D139. S214 (charge relay system) is an active-site residue. PDZ domains are found at residues 258 to 349 and 355 to 447; these read LIDF…LRNG and EVTL…VRGN.

The protein belongs to the peptidase S1C family. In terms of assembly, degQ can reversibly switch between different oligomeric forms that represent inactive (6-mer) and active (12- and 24-mer) protease states. Substrate binding triggers the conversion of the resting DegQ trimer and hexamer into catalytically active 12- and 24-mers. The conversion of 6-mer (DegQ6) into 12-mer (DegQ12) or 24-mer (DegQ24) is crucial in regulating protease activity.

The protein localises to the periplasm. It catalyses the reaction Acts on substrates that are at least partially unfolded. The cleavage site P1 residue is normally between a pair of hydrophobic residues, such as Val-|-Val.. Inhibited by diisopropylfluorophosphate (DFP). DegQ could degrade transiently denatured and unfolded proteins which accumulate in the periplasm following stress conditions. DegQ is efficient with Val-Xaa and Ile-Xaa peptide bonds, suggesting a preference for a beta-branched side chain amino acids. Only unfolded proteins devoid of disulfide bonds appear capable to be cleaved, thereby preventing non-specific proteolysis of folded proteins. DegQ can substitute for the periplasmic protease DegP. The polypeptide is Periplasmic pH-dependent serine endoprotease DegQ (degQ) (Escherichia coli (strain K12)).